Consider the following 151-residue polypeptide: Ribosome maturation factor RimP (151 aa).

It belongs to the RimP family.

The protein localises to the cytoplasm. Its function is as follows. Required for maturation of 30S ribosomal subunits. This chain is Ribosome maturation factor RimP, found in Desulfotalea psychrophila (strain LSv54 / DSM 12343).